We begin with the raw amino-acid sequence, 111 residues long: Putative pterin-4-alpha-carbinolamine dehydratase (111 aa).

Belongs to the pterin-4-alpha-carbinolamine dehydratase family.

It carries out the reaction (4aS,6R)-4a-hydroxy-L-erythro-5,6,7,8-tetrahydrobiopterin = (6R)-L-erythro-6,7-dihydrobiopterin + H2O. This Alkaliphilus metalliredigens (strain QYMF) protein is Putative pterin-4-alpha-carbinolamine dehydratase.